The chain runs to 419 residues: Gamma-glutamyl phosphate reductase (419 aa).

The protein belongs to the gamma-glutamyl phosphate reductase family.

It is found in the cytoplasm. The catalysed reaction is L-glutamate 5-semialdehyde + phosphate + NADP(+) = L-glutamyl 5-phosphate + NADPH + H(+). It functions in the pathway amino-acid biosynthesis; L-proline biosynthesis; L-glutamate 5-semialdehyde from L-glutamate: step 2/2. Functionally, catalyzes the NADPH-dependent reduction of L-glutamate 5-phosphate into L-glutamate 5-semialdehyde and phosphate. The product spontaneously undergoes cyclization to form 1-pyrroline-5-carboxylate. The protein is Gamma-glutamyl phosphate reductase of Yersinia pseudotuberculosis serotype O:1b (strain IP 31758).